A 548-amino-acid polypeptide reads, in one-letter code: Probable inorganic phosphate transporter 1-5 (548 aa).

The Cytoplasmic segment spans residues 1 to 23; the sequence is MVQDRKVLDALDTAKTQWYHFTA. A helical membrane pass occupies residues 24–44; the sequence is VVIAGMGFFTDAYDLFSISLV. Residues 45–69 lie on the Extracellular side of the membrane; sequence TKLLGRIYYFNPASKSPGSLPPNVS. Residues 70-90 traverse the membrane as a helical segment; the sequence is AAVNGVAFCGTLAGQLFFGWL. Residues 91–98 are Cytoplasmic-facing; it reads GDKMGRKK. A helical transmembrane segment spans residues 99–119; that stretch reads VYGMTLMLMVICCLASGLSFG. Topologically, residues 120–123 are extracellular; that stretch reads SSAK. The chain crosses the membrane as a helical span at residues 124 to 144; that stretch reads GVMATLCFFRFWLGFGIGGDY. Topologically, residues 145–163 are cytoplasmic; the sequence is PLSATIMSEYANKRTRGAF. A helical transmembrane segment spans residues 164–184; the sequence is IAAVFAMQGFGNLTGGIVAII. At 185-210 the chain is on the extracellular side; that stretch reads VSAAFKLRFDAPAYRDDRAGSTVPQA. A helical membrane pass occupies residues 211–231; sequence DYAWRIVLMFGAIPALLTYYW. Residues 232 to 303 lie on the Cytoplasmic side of the membrane; the sequence is RMKMPETARY…REFARRHGHH (72 aa). A helical transmembrane segment spans residues 304-324; sequence LLGTTVCWFVLDIAYYSQNLF. Residues 325–355 lie on the Extracellular side of the membrane; it reads QKDIYTAVQWLPKADTMSALEEMFKISRAQT. Residues 356–376 form a helical membrane-spanning segment; the sequence is LVALCGTIPGYWFTVLFIDIV. Topologically, residues 377-378 are cytoplasmic; it reads GR. The helical transmembrane segment at 379–399 threads the bilayer; sequence FAIQLGGFFLMTAFMLGLAVP. Topologically, residues 400-405 are extracellular; sequence YHHWTT. A helical membrane pass occupies residues 406–426; it reads PGNHVGFVVMYAFTFFFANFG. The Cytoplasmic portion of the chain corresponds to 427 to 449; the sequence is PNSTTFIVPAEIFPARLRSTCHG. A helical membrane pass occupies residues 450–470; that stretch reads ISSAAGKMGAIVGSFGFLYAA. Residues 471 to 490 are Extracellular-facing; it reads QSTDPSKTDAGYPRGIGVRN. Residues 491–511 traverse the membrane as a helical segment; it reads SLFLLAGCNVVGFLFTFLVPE. Topologically, residues 512–548 are cytoplasmic; that stretch reads SKGKSLEELSGENEMEAEPAAATNSYRQTVPDSGQSE. Residues 518-548 are disordered; it reads EELSGENEMEAEPAAATNSYRQTVPDSGQSE. Residues 533–548 show a composition bias toward polar residues; the sequence is ATNSYRQTVPDSGQSE.

It belongs to the major facilitator superfamily. Phosphate:H(+) symporter (TC 2.A.1.9) family. In terms of tissue distribution, expressed at low levels in roots.

The protein resides in the membrane. High-affinity transporter for external inorganic phosphate. The sequence is that of Probable inorganic phosphate transporter 1-5 (PHT1-5) from Oryza sativa subsp. japonica (Rice).